A 214-amino-acid chain; its full sequence is Peroxiredoxin 2 (214 aa).

Residues methionine 1–valine 157 enclose the Thioredoxin domain. Catalysis depends on cysteine 45, which acts as the Cysteine sulfenic acid (-SOH) intermediate. Residue arginine 120 participates in substrate binding.

It belongs to the peroxiredoxin family. Prx6 subfamily. As to quaternary structure, homodecamer. Pentamer of dimers that assemble into a ring structure.

It localises to the cytoplasm. The enzyme catalyses a hydroperoxide + [thioredoxin]-dithiol = an alcohol + [thioredoxin]-disulfide + H2O. Thiol-specific peroxidase that catalyzes the reduction of hydrogen peroxide and organic hydroperoxides to water and alcohols, respectively. Plays a role in cell protection against oxidative stress by detoxifying peroxides. The sequence is that of Peroxiredoxin 2 from Sulfuracidifex metallicus (Sulfolobus metallicus).